A 248-amino-acid polypeptide reads, in one-letter code: DNA repair protein RecO (248 aa).

It belongs to the RecO family.

In terms of biological role, involved in DNA repair and RecF pathway recombination. In Chelativorans sp. (strain BNC1), this protein is DNA repair protein RecO.